We begin with the raw amino-acid sequence, 252 residues long: 3-deoxy-manno-octulosonate cytidylyltransferase (252 aa).

It belongs to the KdsB family.

Its subcellular location is the cytoplasm. The enzyme catalyses 3-deoxy-alpha-D-manno-oct-2-ulosonate + CTP = CMP-3-deoxy-beta-D-manno-octulosonate + diphosphate. Its pathway is nucleotide-sugar biosynthesis; CMP-3-deoxy-D-manno-octulosonate biosynthesis; CMP-3-deoxy-D-manno-octulosonate from 3-deoxy-D-manno-octulosonate and CTP: step 1/1. It participates in bacterial outer membrane biogenesis; lipopolysaccharide biosynthesis. Its function is as follows. Activates KDO (a required 8-carbon sugar) for incorporation into bacterial lipopolysaccharide in Gram-negative bacteria. The protein is 3-deoxy-manno-octulosonate cytidylyltransferase of Solibacter usitatus (strain Ellin6076).